Here is a 2726-residue protein sequence, read N- to C-terminus: Filamin-C (2726 aa).

The actin-binding stretch occupies residues 1-260 (MMNNSNYSDA…VMTYLSQFPK (260 aa)). A Phosphoserine modification is found at serine 5. Calponin-homology (CH) domains are found at residues 37–143 (KIQQ…LHYS) and 160–263 (QTPK…KAKL). 15 Filamin repeats span residues 271-369 (SKQL…EVNV), 371-469 (MALG…PVHV), 470-566 (AEAC…EVQV), 567-659 (SPEA…IAHI), 663-759 (PPDC…RVNV), 760-862 (GEGS…HIKV), 863-961 (DPSH…VVNV), 962-1057 (APPL…AVEG), 1058-1150 (VLPP…KATI), 1151-1245 (QPVF…RVHV), 1246-1345 (QPAV…RVGV), 1346-1438 (TEGC…RVPV), 1439-1534 (KDVV…KIKV), 1535-1631 (LPAH…RIHA), and 1636-1735 (DASK…HVLA). Arginine 1003 is modified (omega-N-methylarginine). Residues serine 1162 and serine 1339 each carry the phosphoserine modification. Residues 1736-1759 (CDPLPHVEEPAEVLQLHQPYAPLR) are hinge 1. Filamin repeat units lie at residues 1760 to 1854 (PGTC…LQFY), 1855 to 1947 (VDAI…TAKI), 1948 to 2034 (TGDD…KILV), and 2037 to 2129 (SEIG…TVKV). A Phosphoserine modification is found at serine 2043. Residues 2163–2244 (GNWFQMVSAQ…FGSITRQQEG (82 aa)) form an intradomain insert; mediate targeting to Z lines region. Basic and acidic residues predominate over residues 2194 to 2210 (ISKTRGGETKREVRVEE). The segment at 2194 to 2214 (ISKTRGGETKREVRVEESTQV) is disordered. A phosphoserine mark is found at serine 2234 and serine 2237. Threonine 2239 is modified (phosphothreonine). A compositionally biased stretch (polar residues) spans 2241 to 2260 (QQEGEASSQDMTAQVTSPSG). Positions 2241-2261 (QQEGEASSQDMTAQVTSPSGK) are disordered. One copy of the Filamin 20; mediates interaction with XIRP1 repeat lies at 2245-2307 (EASSQDMTAQ…VPGSPFQFTV (63 aa)). Filamin repeat units follow at residues 2310 to 2402 (LGEG…VVPV), 2404 to 2497 (SLSD…KIRV), and 2501 to 2593 (SQAG…KAKV). The interval 2404–2725 (SLSDDARRLT…VPGSPFKVNV (322 aa)) is interaction with INPPL1. 6 positions are modified to phosphoserine: serine 2587, serine 2618, serine 2621, serine 2633, serine 2715, and serine 2719. The tract at residues 2594–2630 (TGPRLSGGHSLHETSTVLVETVTKSSSSRGASYSSIP) is hinge 2. Positions 2594-2726 (TGPRLSGGHS…PGSPFKVNVP (133 aa)) are self-association site, tail. Residues 2631-2725 (KFSSDASKVV…VPGSPFKVNV (95 aa)) form a Filamin 24 repeat.

It belongs to the filamin family. In terms of assembly, homodimer; the filamin repeat 24 and the second hinge domain are important for dimer formation. Interacts with FLNB, KCND2, INPPL1, ITGB1A, MYOT, MYOZ1 and MYOZ3. Interacts with sarcoglycans SGCD and SGCG. Interacts (via filament repeats 17-18, 20-21 and 24) with USP25 (isoform USP25m only). Interacts with FBLIM1. Interacts with KY. Interacts with IGFN1. Interacts with MICALL2. Interacts with XIRP1; this interaction is mediated by filamin 20 repeat. Interacts with ANK3. Interacts with SYNPO2. Post-translationally, ubiquitinated by FBXL22, leading to proteasomal degradation.

It localises to the cytoplasm. The protein resides in the membrane. It is found in the cytoskeleton. Its subcellular location is the myofibril. The protein localises to the sarcomere. It localises to the z line. Muscle-specific filamin, which plays a central role in sarcomere assembly and organization. Critical for normal myogenesis, it probably functions as a large actin-cross-linking protein with structural functions at the Z lines in muscle cells. May be involved in reorganizing the actin cytoskeleton in response to signaling events. The polypeptide is Filamin-C (Flnc) (Rattus norvegicus (Rat)).